A 290-amino-acid chain; its full sequence is 4-hydroxybenzoate octaprenyltransferase (290 aa).

The next 6 membrane-spanning stretches (helical) occupy residues 38–58, 99–119, 141–161, 213–233, 238–258, and 268–288; these read LAGMAIPALGTLTVFILGVFF, LFGALVGISFALVLTLNSMTI, LPQLVLGAAFGWSIPMVFTAV, LIIGLLQLATLLLLGVIGWQL, IYYLALAGAAGLFLWQQKLIV, and AFLNNNLVGMLIFVGILLSLL.

This sequence belongs to the UbiA prenyltransferase family. It depends on Mg(2+) as a cofactor.

It localises to the cell inner membrane. It carries out the reaction all-trans-octaprenyl diphosphate + 4-hydroxybenzoate = 4-hydroxy-3-(all-trans-octaprenyl)benzoate + diphosphate. The protein operates within cofactor biosynthesis; ubiquinone biosynthesis. In terms of biological role, catalyzes the prenylation of para-hydroxybenzoate (PHB) with an all-trans polyprenyl group. Mediates the second step in the final reaction sequence of ubiquinone-8 (UQ-8) biosynthesis, which is the condensation of the polyisoprenoid side chain with PHB, generating the first membrane-bound Q intermediate 3-octaprenyl-4-hydroxybenzoate. This chain is 4-hydroxybenzoate octaprenyltransferase, found in Sodalis glossinidius (strain morsitans).